A 245-amino-acid chain; its full sequence is Pathogenesis-related thaumatin-like protein 3.6 (245 aa).

An N-terminal signal peptide occupies residues 1 to 19 (GSIPFWIALIASFSVFLQG). 8 disulfides stabilise this stretch: Cys-33–Cys-226, Cys-74–Cys-84, Cys-89–Cys-95, Cys-142–Cys-215, Cys-148–Cys-198, Cys-156–Cys-166, Cys-170–Cys-179, and Cys-180–Cys-185. A glycan (N-linked (GlcNAc...) asparagine) is linked at Asn-90. N-linked (GlcNAc...) asparagine glycosylation is present at Asn-186.

This sequence belongs to the thaumatin family. Mostly expressed in strobili, and, to a lower extent, in roots of seedlings and saplings.

May be involved in disease resistance. The chain is Pathogenesis-related thaumatin-like protein 3.6 from Cryptomeria japonica (Japanese cedar).